A 91-amino-acid chain; its full sequence is Non-specific lipid-transfer protein 1 (91 aa).

4 cysteine pairs are disulfide-bonded: C3–C50, C13–C27, C28–C73, and C48–C87.

This sequence belongs to the plant LTP family.

Functionally, plant non-specific lipid-transfer proteins transfer phospholipids as well as galactolipids across membranes. May play a role in wax or cutin deposition in the cell walls of expanding epidermal cells and certain secretory tissues. The polypeptide is Non-specific lipid-transfer protein 1 (Morus nigra (Black mulberry)).